Reading from the N-terminus, the 943-residue chain is UvrABC system protein A (943 aa).

32–39 (GLSGSGKS) provides a ligand contact to ATP. The segment at 251–278 (CPVCGFTVPELEPRLFSFNAPFGSCPTC) adopts a C4-type zinc-finger fold. 2 ABC transporter domains span residues 308–589 (WNPI…KKSI) and 609–937 (GSGR…QYLK). Residue 641-648 (GVSGSGKS) coordinates ATP. A C4-type zinc finger spans residues 740–766 (CEACSGDGIIKIEMHFLPDVYVPCEVC).

Belongs to the ABC transporter superfamily. UvrA family. In terms of assembly, forms a heterotetramer with UvrB during the search for lesions.

The protein resides in the cytoplasm. Its function is as follows. The UvrABC repair system catalyzes the recognition and processing of DNA lesions. UvrA is an ATPase and a DNA-binding protein. A damage recognition complex composed of 2 UvrA and 2 UvrB subunits scans DNA for abnormalities. When the presence of a lesion has been verified by UvrB, the UvrA molecules dissociate. The polypeptide is UvrABC system protein A (Streptococcus mutans serotype c (strain ATCC 700610 / UA159)).